Consider the following 87-residue polypeptide: Small ribosomal subunit protein uS15c (87 aa).

It belongs to the universal ribosomal protein uS15 family. In terms of assembly, part of the 30S ribosomal subunit.

The protein localises to the plastid. Its subcellular location is the chloroplast. The sequence is that of Small ribosomal subunit protein uS15c (rps15) from Illicium oligandrum (Star anise).